A 207-amino-acid polypeptide reads, in one-letter code: Urease accessory protein UreG (207 aa).

Residue G12 to T19 participates in GTP binding.

The protein belongs to the SIMIBI class G3E GTPase family. UreG subfamily. As to quaternary structure, homodimer. UreD, UreF and UreG form a complex that acts as a GTP-hydrolysis-dependent molecular chaperone, activating the urease apoprotein by helping to assemble the nickel containing metallocenter of UreC. The UreE protein probably delivers the nickel.

Its subcellular location is the cytoplasm. Facilitates the functional incorporation of the urease nickel metallocenter. This process requires GTP hydrolysis, probably effectuated by UreG. In Cereibacter sphaeroides (strain ATCC 17029 / ATH 2.4.9) (Rhodobacter sphaeroides), this protein is Urease accessory protein UreG.